The following is a 118-amino-acid chain: Holo-[acyl-carrier-protein] synthase (118 aa).

Asp5 and Glu50 together coordinate Mg(2+).

It belongs to the P-Pant transferase superfamily. AcpS family. The cofactor is Mg(2+).

It is found in the cytoplasm. The enzyme catalyses apo-[ACP] + CoA = holo-[ACP] + adenosine 3',5'-bisphosphate + H(+). Functionally, transfers the 4'-phosphopantetheine moiety from coenzyme A to a Ser of acyl-carrier-protein. The sequence is that of Holo-[acyl-carrier-protein] synthase from Wolinella succinogenes (strain ATCC 29543 / DSM 1740 / CCUG 13145 / JCM 31913 / LMG 7466 / NCTC 11488 / FDC 602W) (Vibrio succinogenes).